The following is a 51-amino-acid chain: Structural protein ORF5a (51 aa).

The chain crosses the membrane as a helical span at residues 11-28 (RGLLLAIAFFVVYRAVLF).

This sequence belongs to the arteriviridae ORF5a protein family. As to quaternary structure, interacts with GP2b and GP4.

It localises to the virion. It is found in the host cell membrane. Minor virion component that plays an essential role in virus infectivity. The protein is Structural protein ORF5a of Porcine reproductive and respiratory syndrome virus (strain VR-2332) (PRRSV).